The sequence spans 680 residues: DNA ligase (680 aa).

Residues Asp-38 to Asp-42, Ser-87 to Leu-88, and Glu-119 contribute to the NAD(+) site. The active-site N6-AMP-lysine intermediate is Lys-121. Residues Arg-142, Glu-179, Lys-296, and Lys-320 each contribute to the NAD(+) site. Positions 414, 417, 432, and 438 each coordinate Zn(2+). A BRCT domain is found at Ile-597–Glu-680.

Belongs to the NAD-dependent DNA ligase family. LigA subfamily. Mg(2+) is required as a cofactor. The cofactor is Mn(2+).

It carries out the reaction NAD(+) + (deoxyribonucleotide)n-3'-hydroxyl + 5'-phospho-(deoxyribonucleotide)m = (deoxyribonucleotide)n+m + AMP + beta-nicotinamide D-nucleotide.. In terms of biological role, DNA ligase that catalyzes the formation of phosphodiester linkages between 5'-phosphoryl and 3'-hydroxyl groups in double-stranded DNA using NAD as a coenzyme and as the energy source for the reaction. It is essential for DNA replication and repair of damaged DNA. The protein is DNA ligase of Cellvibrio japonicus (strain Ueda107) (Pseudomonas fluorescens subsp. cellulosa).